We begin with the raw amino-acid sequence, 359 residues long: Popy class I histocompatibility antigen, alpha chain E (359 aa).

Positions 1-18 (GTLLLLLSEALALTETWA) are cleaved as a signal peptide. The segment at 19–108 (GSHSLKYFHT…LRGYYNQTEA (90 aa)) is alpha-1. The Extracellular portion of the chain corresponds to 19-302 (GSHSLKYFHT…EPASQTTIPI (284 aa)). An N-linked (GlcNAc...) asparagine glycan is attached at Asn104. The interval 109-200 (GSHTLQWMHG…EKGKETLLHL (92 aa)) is alpha-2. 2 disulfide bridges follow: Cys119–Cys182 and Cys221–Cys277. Residues 201-292 (DPPKTHVTHH…GLPEPLTLRW (92 aa)) form an alpha-3 region. The Ig-like C1-type domain maps to 203–291 (PKTHVTHHRI…EGLPEPLTLR (89 aa)). A connecting peptide region spans residues 293-302 (EPASQTTIPI). Residues 303–326 (VGIFAGLVLLGAVVTGATVVAAVM) traverse the membrane as a helical segment. Residues 327–359 (WRKKSSGGKGGSYSKAEWSDSAQGSESLTACKA) lie on the Cytoplasmic side of the membrane. Residues 330–359 (KSSGGKGGSYSKAEWSDSAQGSESLTACKA) form a disordered region. Polar residues predominate over residues 346–359 (DSAQGSESLTACKA). Ser351 is modified (phosphoserine).

The protein belongs to the MHC class I family. As to quaternary structure, heterodimer of an alpha chain and a beta chain (beta-2-microglobulin).

The protein resides in the membrane. Functionally, involved in the presentation of foreign antigens to the immune system. The sequence is that of Popy class I histocompatibility antigen, alpha chain E (Popy-E) from Pongo pygmaeus (Bornean orangutan).